Here is a 21-residue protein sequence, read N- to C-terminus: Chlorophyllase type 2 (21 aa).

It belongs to the AB hydrolase superfamily. Lipase family.

It carries out the reaction a chlorophyll + H2O = a chlorophyllide + phytol + H(+). Its pathway is porphyrin-containing compound metabolism; chlorophyll degradation. In terms of biological role, catalyzes the hydrolysis of ester bond in chlorophyll to yield chlorophyllide and phytol. This chain is Chlorophyllase type 2, found in Chenopodium album (Fat hen).